A 666-amino-acid chain; its full sequence is tRNA 5-methylaminomethyl-2-thiouridine biosynthesis bifunctional protein MnmC (666 aa).

Residues 1 to 253 (MSSPFVPIIT…KRHMICAHYE (253 aa)) form a tRNA (mnm(5)s(2)U34)-methyltransferase region. Residues 283–666 (VGGGLAGCFI…FLRKKIIQGP (384 aa)) form an FAD-dependent cmnm(5)s(2)U34 oxidoreductase region.

In the N-terminal section; belongs to the methyltransferase superfamily. tRNA (mnm(5)s(2)U34)-methyltransferase family. It in the C-terminal section; belongs to the DAO family. FAD serves as cofactor.

The protein resides in the cytoplasm. It catalyses the reaction 5-aminomethyl-2-thiouridine(34) in tRNA + S-adenosyl-L-methionine = 5-methylaminomethyl-2-thiouridine(34) in tRNA + S-adenosyl-L-homocysteine + H(+). In terms of biological role, catalyzes the last two steps in the biosynthesis of 5-methylaminomethyl-2-thiouridine (mnm(5)s(2)U) at the wobble position (U34) in tRNA. Catalyzes the FAD-dependent demodification of cmnm(5)s(2)U34 to nm(5)s(2)U34, followed by the transfer of a methyl group from S-adenosyl-L-methionine to nm(5)s(2)U34, to form mnm(5)s(2)U34. This chain is tRNA 5-methylaminomethyl-2-thiouridine biosynthesis bifunctional protein MnmC, found in Legionella pneumophila (strain Lens).